The sequence spans 417 residues: MKFTELTVKEFENFVQNPSLESHYFQVKENIATRESDGFQVVLLGVKDDDNRVIAASLFSKIPTMGSYVYYSNRGPVMDYSDLGLVDFYLKELDKYLHQHQCLYVKLDPYWLYQVYDKDINPLTEKNDALVNLFKSHGYDHHGFTTQYDSSSQVRWMGVLDLEGKTPASLRKEFDSQRKRNINKAINYGVKVRFLSKDEFDLFLDLYRETEARTGFASKTDDYFYNFIEHYGDKVLVPLAYIDLNEYIQHLQESLNDKENRRDDMMAKENKTDKQLKKIAELDKQIDHDKKELLQASELRQTDGEILNLASGVYFANAYEVNYFSGGSSEKYNQYMGPYAMHWHMINYCFDNGYDRYNFYGLSGDFTENSEDYGVYRFKRGFNVRIEELIGDFYKPINKVKYWLFNTLDRIRNKLKK.

This sequence belongs to the FemABX family.

The protein resides in the cytoplasm. The enzyme catalyses MurNAc-L-Ala-D-isoglutaminyl-L-Lys-(N(6)-tri-Gly)-D-Ala-D-Ala-diphospho-di-trans,octa-cis-undecaprenyl-GlcNAc + 2 glycyl-tRNA(Gly) = MurNAc-L-Ala-D-isoglutaminyl-L-Lys-(N(6)-penta-Gly)-D-Ala-D-Ala-diphospho-di-trans,octa-cis-undecaprenyl-GlcNAc + 2 tRNA(Gly) + 2 H(+). Its function is as follows. Catalyzes the incorporation of amino acid(s) into the interchain peptide bridge of peptidoglycan, using aminoacyl-tRNA as amino acid donor. The protein is Aminoacyltransferase FemB (femB) of Staphylococcus epidermidis (strain ATCC 35984 / DSM 28319 / BCRC 17069 / CCUG 31568 / BM 3577 / RP62A).